We begin with the raw amino-acid sequence, 178 residues long: Small ribosomal subunit protein uS4 (178 aa).

Positions 104 to 166 constitute an S4 RNA-binding domain; the sequence is RRLQTLVYRK…PNSPMALENH (63 aa).

This sequence belongs to the universal ribosomal protein uS4 family. Part of the 30S ribosomal subunit. Contacts protein S5. The interaction surface between S4 and S5 is involved in control of translational fidelity.

Its function is as follows. One of the primary rRNA binding proteins, it binds directly to 16S rRNA where it nucleates assembly of the body of the 30S subunit. In terms of biological role, with S5 and S12 plays an important role in translational accuracy. This chain is Small ribosomal subunit protein uS4, found in Methanococcus vannielii (strain ATCC 35089 / DSM 1224 / JCM 13029 / OCM 148 / SB).